The chain runs to 346 residues: Ribosomal RNA small subunit methyltransferase H (346 aa).

S-adenosyl-L-methionine-binding positions include 46–48, D63, F90, D113, and Q120; that span reads GGY. The tract at residues 270-327 is disordered; it reads GGSAGSRHMPETHMRLPSFTPAVKGAVGPTPEEEERNPRARSAKLRAGIRTENSPLED.

Belongs to the methyltransferase superfamily. RsmH family.

Its subcellular location is the cytoplasm. It catalyses the reaction cytidine(1402) in 16S rRNA + S-adenosyl-L-methionine = N(4)-methylcytidine(1402) in 16S rRNA + S-adenosyl-L-homocysteine + H(+). Functionally, specifically methylates the N4 position of cytidine in position 1402 (C1402) of 16S rRNA. This chain is Ribosomal RNA small subunit methyltransferase H, found in Brucella ovis (strain ATCC 25840 / 63/290 / NCTC 10512).